Here is an 805-residue protein sequence, read N- to C-terminus: Phenylalanine--tRNA ligase beta subunit (805 aa).

The region spanning 39–148 (APPFTGVVVT…AALRPGTDIR (110 aa)) is the tRNA-binding domain. One can recognise a B5 domain in the interval 399–474 (PVREPVRMRL…RVYGFERIPD (76 aa)). Mg(2+)-binding residues include aspartate 452, aspartate 458, glutamate 461, and glutamate 462. An FDX-ACB domain is found at 703–804 (SRQPVVVRDL…LVAAHNARQR (102 aa)).

This sequence belongs to the phenylalanyl-tRNA synthetase beta subunit family. Type 1 subfamily. Tetramer of two alpha and two beta subunits. It depends on Mg(2+) as a cofactor.

Its subcellular location is the cytoplasm. The enzyme catalyses tRNA(Phe) + L-phenylalanine + ATP = L-phenylalanyl-tRNA(Phe) + AMP + diphosphate + H(+). This Bordetella pertussis (strain Tohama I / ATCC BAA-589 / NCTC 13251) protein is Phenylalanine--tRNA ligase beta subunit.